The primary structure comprises 266 residues: Apolipoprotein A-I (266 aa).

The signal sequence occupies residues 1–18; it reads MKAVVLTLAVLFLTGSQA. 2 tandem repeats follow at residues 67–88 and 89–110. Positions 67-266 are 10 X approximate tandem repeats; the sequence is LKLLDNWDSL…DEATKKLNSQ (200 aa). M109 bears the Methionine sulfoxide mark. One copy of the 3; half-length repeat lies at 111–121; that stretch reads KDLEEVKKKVQ. A run of 5 repeats spans residues 122–143, 144–165, 166–187, 188–209, and 210–231. The 9; half-length repeat unit spans residues 232 to 242; the sequence is PALEDLRQGLL. Copy 10 of the repeat occupies 243-266; sequence PVLENFRVSLLAAVDEATKKLNSQ.

The protein belongs to the apolipoprotein A1/A4/E family. As to quaternary structure, homodimer. Interacts with APOA1BP and CLU. Component of a sperm activating protein complex (SPAP), consisting of APOA1, an immunoglobulin heavy chain, an immunoglobulin light chain and albumin. Interacts with NDRG1. Interacts with SCGB3A2. Interacts with NAXE and YJEFN3. Post-translationally, glycosylated. Palmitoylated. In terms of processing, phosphorylation sites are present in the extracellular medium.

It is found in the secreted. In terms of biological role, participates in the reverse transport of cholesterol from tissues to the liver for excretion by promoting cholesterol efflux from tissues and by acting as a cofactor for the lecithin cholesterol acyltransferase (LCAT). As part of the SPAP complex, activates spermatozoa motility. This is Apolipoprotein A-I (APOA1) from Leptonychotes weddellii (Weddell seal).